Consider the following 246-residue polypeptide: MADS-box transcription factor 14 (246 aa).

Residues 1–61 enclose the MADS-box domain; the sequence is MGRGKVQLKR…GKLYKYATDS (61 aa). The K-box domain occupies 88-178; sequence QGNWCHEYRK…QKELVEKQKV (91 aa). The tract at residues 180–199 is disordered; the sequence is KQQVQWDQTQPQTSSSSSSF.

Highly expressed in sterile lemmas, at intermediate levels in stamens, and weakly in lemmas, paleas and carpels.

It is found in the nucleus. In terms of biological role, probable transcription factor. This Oryza sativa subsp. indica (Rice) protein is MADS-box transcription factor 14 (MADS14).